The chain runs to 337 residues: Anthranilate phosphoribosyltransferase (337 aa).

5-phospho-alpha-D-ribose 1-diphosphate is bound by residues G81, G84–D85, S89, N91–T94, K109–S117, and A121. Residue G81 participates in anthranilate binding. S93 serves as a coordination point for Mg(2+). N112 serves as a coordination point for anthranilate. R167 contributes to the anthranilate binding site. Residues D226 and E227 each contribute to the Mg(2+) site.

It belongs to the anthranilate phosphoribosyltransferase family. In terms of assembly, homodimer. It depends on Mg(2+) as a cofactor.

It catalyses the reaction N-(5-phospho-beta-D-ribosyl)anthranilate + diphosphate = 5-phospho-alpha-D-ribose 1-diphosphate + anthranilate. Its pathway is amino-acid biosynthesis; L-tryptophan biosynthesis; L-tryptophan from chorismate: step 2/5. In terms of biological role, catalyzes the transfer of the phosphoribosyl group of 5-phosphorylribose-1-pyrophosphate (PRPP) to anthranilate to yield N-(5'-phosphoribosyl)-anthranilate (PRA). The chain is Anthranilate phosphoribosyltransferase from Methylobacterium nodulans (strain LMG 21967 / CNCM I-2342 / ORS 2060).